Consider the following 265-residue polypeptide: Indole-3-glycerol phosphate synthase (265 aa).

This sequence belongs to the TrpC family.

It carries out the reaction 1-(2-carboxyphenylamino)-1-deoxy-D-ribulose 5-phosphate + H(+) = (1S,2R)-1-C-(indol-3-yl)glycerol 3-phosphate + CO2 + H2O. Its pathway is amino-acid biosynthesis; L-tryptophan biosynthesis; L-tryptophan from chorismate: step 4/5. This chain is Indole-3-glycerol phosphate synthase, found in Xanthomonas oryzae pv. oryzae (strain PXO99A).